The following is a 338-amino-acid chain: 3-keto-steroid reductase erg27 (338 aa).

Residues leucine 16, threonine 44, lysine 50, and aspartate 75 each contribute to the NADP(+) site. Active-site proton donor residues include serine 180 and tyrosine 203. NADP(+) contacts are provided by tyrosine 203, lysine 207, and threonine 236. Lysine 207 functions as the Lowers pKa of active site Tyr in the catalytic mechanism.

It belongs to the short-chain dehydrogenases/reductases (SDR) family. ERG27 subfamily. In terms of assembly, heterotetramer of erg25, erg26, erg27 and erg28. Erg28 acts as a scaffold to tether erg27 and other 4,4-demethylation-related enzymes, forming a demethylation enzyme complex, in the endoplasmic reticulum.

The enzyme catalyses 3-dehydro-4alpha-methylzymosterol + NADPH + H(+) = 4alpha-methylzymosterol + NADP(+). It participates in steroid biosynthesis; zymosterol biosynthesis; zymosterol from lanosterol: step 5/6. The protein operates within steroid metabolism; ergosterol biosynthesis. Functionally, 3-keto-steroid reductase; part of the third module of ergosterol biosynthesis pathway that includes by the late steps of the pathway. Erg27 is a catalytic component of the C-4 demethylation complex that catalyze the reduction of the keto group on the C-3. The third module or late pathway involves the ergosterol synthesis itself through consecutive reactions that mainly occur in the endoplasmic reticulum (ER) membrane. Firstly, the squalene synthase erg9 catalyzes the condensation of 2 farnesyl pyrophosphate moieties to form squalene, which is the precursor of all steroids. Secondly, squalene is converted into lanosterol by the consecutive action of the squalene epoxidase erg1 and the lanosterol synthase erg7. The lanosterol 14-alpha-demethylase erg11/cyp1 catalyzes C14-demethylation of lanosterol to produce 4,4'-dimethyl cholesta-8,14,24-triene-3-beta-ol. In the next steps, a complex process involving various demethylation, reduction and desaturation reactions catalyzed by the C-14 reductase erg24 and the C-4 demethylation complex erg25-erg26-erg27 leads to the production of zymosterol. Erg28 likely functions in the C-4 demethylation complex reaction by tethering erg26 and Erg27 to the endoplasmic reticulum or to facilitate interaction between these proteins. Then, the sterol 24-C-methyltransferase erg6 catalyzes the methyl transfer from S-adenosyl-methionine to the C-24 of zymosterol to form fecosterol. The C-8 sterol isomerase erg2 catalyzes the reaction which results in unsaturation at C-7 in the B ring of sterols and thus converts fecosterol to episterol. The sterol-C5-desaturases erg31 and erg32 then catalyze the introduction of a C-5 double bond in the B ring to produce 5-dehydroepisterol. The C-22 sterol desaturase erg5 further converts 5-dehydroepisterol into ergosta-5,7,22,24(28)-tetraen-3beta-ol by forming the C-22(23) double bond in the sterol side chain. Finally, ergosta-5,7,22,24(28)-tetraen-3beta-ol is substrate of the C-24(28) sterol reductase erg4 to produce ergosterol. In the genus Schizosaccharomyces, a second route exists between lanosterol and fecosterol, via the methylation of lanosterol to eburicol by erg6, followed by C14-demethylation by erg11/cyp1 and C4-demethylation by the demethylation complex erg25-erg26-erg27. The polypeptide is 3-keto-steroid reductase erg27 (Schizosaccharomyces pombe (strain 972 / ATCC 24843) (Fission yeast)).